Consider the following 165-residue polypeptide: UPF0114 protein in repA1-repA2 intergenic region (165 aa).

The next 3 membrane-spanning stretches (helical) occupy residues 10–32 (YASR…LLTL), 53–75 (LILI…MVMF), and 136–155 (IMWC…GMAC).

Belongs to the UPF0114 family.

The protein resides in the cell membrane. This Buchnera aphidicola subsp. Geoica urticularia protein is UPF0114 protein in repA1-repA2 intergenic region.